Reading from the N-terminus, the 407-residue chain is Triose phosphate/phosphate translocator, chloroplastic (407 aa).

The N-terminal 81 residues, 1–81, are a transit peptide targeting the chloroplast; the sequence is MESRVLSSGA…VKRDVLKPCS (81 aa). Topologically, residues 82 to 101 are chloroplast intermembrane; sequence ATASDSAGDAAPVGFLAKYP. The chain crosses the membrane as a helical span at residues 102-122; sequence FLVTGFFFFMWYFLNVIFNIL. Residues 123–134 lie on the Lumenal side of the membrane; sequence NKKIYNYFPYPY. Residues 135 to 155 form a helical membrane-spanning segment; the sequence is FVSVIHLAVGVVYCLGSWTVG. Residues 156–212 are Chloroplast intermembrane-facing; the sequence is LPKRAPVDSNILKLLIPVGFCHALGHVTSNVSFAAVAVSFTHTIKALEPFFNAAASQ. A helical membrane pass occupies residues 213–233; that stretch reads FVLGQSIPISLWLSLAPVVIG. At 234–277 the chain is on the lumenal side; the sequence is VSMASLTELSFNWLGFISAMISNISFTYRSIYSKKAMTDMDSTN. Residues 278–297 traverse the membrane as a helical segment; it reads LYAYISIIALLFCIPPAVLF. The Chloroplast intermembrane portion of the chain corresponds to 298–375; the sequence is EGPQLLKHGF…IVFGNKISTQ (78 aa). Residues 376 to 396 traverse the membrane as a helical segment; that stretch reads TAIGTSIAIAGVAIYSLIKAR. The Lumenal portion of the chain corresponds to 397 to 407; it reads IEEEKRRMKSA.

The protein belongs to the TPT transporter family. TPT (TC 2.A.7.9) subfamily. In terms of assembly, homodimer.

It is found in the plastid. Its subcellular location is the chloroplast membrane. Functionally, mediates the export of fixed carbons from the chloroplasts into the cytosol in the form of triose phosphates. In addition, it can also bind and transport phosphoenolpyruvate, thereby increasing the photosynthetic efficiency of C4-plants. This Flaveria trinervia (Clustered yellowtops) protein is Triose phosphate/phosphate translocator, chloroplastic (TPT).